Reading from the N-terminus, the 189-residue chain is Cell division protein SepF (189 aa).

Disordered regions lie at residues 1-75 (MEGQ…GLPG) and 155-174 (STPS…SPTP).

This sequence belongs to the SepF family. In terms of assembly, homodimer. Interacts with FtsZ.

It is found in the cytoplasm. Its function is as follows. Cell division protein that is part of the divisome complex and is recruited early to the Z-ring. Probably stimulates Z-ring formation, perhaps through the cross-linking of FtsZ protofilaments. Its function overlaps with FtsA. This is Cell division protein SepF from Synechococcus sp. (strain JA-3-3Ab) (Cyanobacteria bacterium Yellowstone A-Prime).